The primary structure comprises 62 residues: Enterocin E-760 (62 aa).

It localises to the secreted. Bacteriocin active against the Gram-negative bacteria S.enteritidis, S.choleraesuis, S.typhimurium, S.gallinarum, E.coli O157:H7, Y.enterocolitica, C.freundii, K.pneumoniae, S.dysentriae, P.aeruginosa, P.mirabilis, M.morganii, C.jejuni and 20 other Campylobacter isolates, and the Gram-positive bacteria S.aureus, S.epidermidis and L.monocytogenes. The protein is Enterocin E-760 of Enterococcus sp.